Consider the following 215-residue polypeptide: uncharacterized protein (215 aa).

Residues 1–17 (MKKVLASATILSLMLVG) form the signal peptide. The segment at 17 to 110 (GCSNGGNDES…NKQQQSVQDN (94 aa)) is disordered. A lipid anchor (N-palmitoyl cysteine) is attached at Cys18. The S-diacylglycerol cysteine moiety is linked to residue Cys18. Residues 25 to 62 (ESSHKDDSSKTEQKDKSSSQHDSKKDSKRNDTNNKQDN) are compositionally biased toward basic and acidic residues. Low complexity-rich tracts occupy residues 63 to 76 (QENN…NNQN) and 91 to 110 (NSNG…VQDN).

Its subcellular location is the cell membrane. This is an uncharacterized protein from Staphylococcus epidermidis (strain ATCC 35984 / DSM 28319 / BCRC 17069 / CCUG 31568 / BM 3577 / RP62A).